Consider the following 577-residue polypeptide: Methionine--tRNA ligase, mitochondrial (577 aa).

Positions 25–37 match the 'HIGH' region motif; sequence PIFYVNAAPHIGH. The 'KMSKS' region motif lies at 329–333; the sequence is KMSKS. K332 is a binding site for ATP.

Belongs to the class-I aminoacyl-tRNA synthetase family.

It is found in the mitochondrion matrix. It carries out the reaction tRNA(Met) + L-methionine + ATP = L-methionyl-tRNA(Met) + AMP + diphosphate. The protein is Methionine--tRNA ligase, mitochondrial (MSM1) of Candida albicans (Yeast).